Here is a 534-residue protein sequence, read N- to C-terminus: Coiled-coil domain-containing protein 183 (534 aa).

Coiled-coil stretches lie at residues 10 to 54 (EEQT…NIRR), 136 to 209 (DASK…DMKI), and 323 to 396 (LAQR…HSNM).

This Homo sapiens (Human) protein is Coiled-coil domain-containing protein 183 (CCDC183).